The following is a 433-amino-acid chain: Probable M18 family aminopeptidase 2 (433 aa).

Zn(2+) contacts are provided by His-84, His-161, and His-409.

This sequence belongs to the peptidase M18 family. Requires Zn(2+) as cofactor.

This Clostridium acetobutylicum (strain ATCC 824 / DSM 792 / JCM 1419 / IAM 19013 / LMG 5710 / NBRC 13948 / NRRL B-527 / VKM B-1787 / 2291 / W) protein is Probable M18 family aminopeptidase 2 (apeB).